The following is a 217-amino-acid chain: Adenylate kinase (217 aa).

ATP is bound at residue glycine 10–threonine 15. The segment at serine 30 to valine 59 is NMP. AMP is bound by residues threonine 31, arginine 36, glycine 57–valine 59, glycine 85–arginine 88, and glutamine 92. The interval glycine 122–aspartate 159 is LID. ATP contacts are provided by residues arginine 123 and valine 132–tyrosine 133. Residues arginine 156 and arginine 167 each coordinate AMP. Glycine 203 is a binding site for ATP.

It belongs to the adenylate kinase family. In terms of assembly, monomer.

Its subcellular location is the cytoplasm. The enzyme catalyses AMP + ATP = 2 ADP. The protein operates within purine metabolism; AMP biosynthesis via salvage pathway; AMP from ADP: step 1/1. Its function is as follows. Catalyzes the reversible transfer of the terminal phosphate group between ATP and AMP. Plays an important role in cellular energy homeostasis and in adenine nucleotide metabolism. The polypeptide is Adenylate kinase (Cellvibrio japonicus (strain Ueda107) (Pseudomonas fluorescens subsp. cellulosa)).